We begin with the raw amino-acid sequence, 201 residues long: Membrane protein UL120 (201 aa).

The N-terminal stretch at 1–25 (MYRAGVTLLVVAVVSFGRWDSVTVA) is a signal peptide. Over 26–170 (TTIRVGWWYE…AYFRRSDHRA (145 aa)) the chain is Extracellular. Asn47, Asn50, Asn56, Asn85, Asn96, Asn114, Asn123, and Asn138 each carry an N-linked (GlcNAc...) asparagine; by host glycan. The helical transmembrane segment at 171-191 (FMIVILTQVVFVVFIINASFI) threads the bilayer. Residues 192-201 (WSWTFRRHKR) are Cytoplasmic-facing.

This sequence belongs to the HHV-5 UL120 protein family.

It is found in the host membrane. This is Membrane protein UL120 (UL120) from Human cytomegalovirus (strain Merlin) (HHV-5).